Reading from the N-terminus, the 310-residue chain is Acetylglutamate kinase (310 aa).

Substrate-binding positions include 74 to 75 (GG), arginine 96, and asparagine 201.

This sequence belongs to the acetylglutamate kinase family. ArgB subfamily.

It is found in the cytoplasm. It carries out the reaction N-acetyl-L-glutamate + ATP = N-acetyl-L-glutamyl 5-phosphate + ADP. It functions in the pathway amino-acid biosynthesis; L-arginine biosynthesis; N(2)-acetyl-L-ornithine from L-glutamate: step 2/4. In terms of biological role, catalyzes the ATP-dependent phosphorylation of N-acetyl-L-glutamate. The polypeptide is Acetylglutamate kinase (Arthrobacter sp. (strain FB24)).